A 162-amino-acid polypeptide reads, in one-letter code: Inner membrane protein YbjO (162 aa).

The Periplasmic segment spans residues 1–23 (MEDETLGFFKKTSSSHARLNVPA). The helical transmembrane segment at 24–44 (LVQVAALAIIMIRGLDVLMIF) threads the bilayer. Residues 45–66 (NTLGVRGIGEFIHRSVQTWSLT) are Cytoplasmic-facing. Residues 67-87 (LVFLSSLVLVFIEIWCAFSLV) traverse the membrane as a helical segment. Residues 88 to 94 (KGRRWAR) lie on the Periplasmic side of the membrane. A helical membrane pass occupies residues 95-115 (WLYLLTQITAASYLWAASLGY). Topologically, residues 116-162 (GYPELFSIPGESKREIFHSLMLQKLPDMLILMLLFVPSTSRRFFQLQ) are cytoplasmic.

It localises to the cell inner membrane. This Escherichia coli O157:H7 protein is Inner membrane protein YbjO (ybjO).